We begin with the raw amino-acid sequence, 572 residues long: BOS complex subunit ncln (572 aa).

Residues 1-35 form the signal peptide; the sequence is MFEEAGEVLENMLKVSFPLSLVLFLVLVCPLRAEA. Residues 36–530 are Extracellular-facing; that stretch reads AHEFSVYRMQ…TMNAYRVKPA (495 aa). 3 N-linked (GlcNAc...) asparagine glycosylation sites follow: N108, N234, and N436. The chain crosses the membrane as a helical span at residues 531–551; it reads IFDLLLAVCIASYLGVLYLAI. Residues 552 to 572 are Cytoplasmic-facing; the sequence is QNFGLLYGFLRRVTAPRVKQH.

It belongs to the nicastrin family. Component of the multi-pass translocon (MPT) complex.

Its subcellular location is the endoplasmic reticulum membrane. Component of the multi-pass translocon (MPT) complex that mediates insertion of multi-pass membrane proteins into the lipid bilayer of membranes. The MPT complex takes over after the SEC61 complex: following membrane insertion of the first few transmembrane segments of proteins by the SEC61 complex, the MPT complex occludes the lateral gate of the SEC61 complex to promote insertion of subsequent transmembrane regions. Antagonizes Nodal signaling and subsequent organization of axial structures during mesodermal patterning. Ectopic expression results in cyclopia, due to a defect in mesendoderm patterning. This Danio rerio (Zebrafish) protein is BOS complex subunit ncln (ncln).